Here is an 859-residue protein sequence, read N- to C-terminus: Leucine--tRNA ligase (859 aa).

A 'HIGH' region motif is present at residues 42-52 (PYPSGRLHMGH). Positions 618-622 (KMSKS) match the 'KMSKS' region motif. K621 serves as a coordination point for ATP.

The protein belongs to the class-I aminoacyl-tRNA synthetase family.

It is found in the cytoplasm. It catalyses the reaction tRNA(Leu) + L-leucine + ATP = L-leucyl-tRNA(Leu) + AMP + diphosphate. The chain is Leucine--tRNA ligase from Shewanella sp. (strain ANA-3).